A 134-amino-acid chain; its full sequence is Probable RNA-binding protein MJ0652 (134 aa).

Residues 11-108 (RKLTGKMKRM…REGWKKYLAK (98 aa)) form the CRM domain.

This Methanocaldococcus jannaschii (strain ATCC 43067 / DSM 2661 / JAL-1 / JCM 10045 / NBRC 100440) (Methanococcus jannaschii) protein is Probable RNA-binding protein MJ0652.